A 210-amino-acid chain; its full sequence is MDKNKNISMAVIKRLPKYHRYLNELMKNDVDRISSKELGEKIGFTASQIRQDLNCFGDFGQQGYGYNVKELYTQINSILGLDKEYNAVLIGAGNIGQAIANYSRFDKLGIMITAIFDANPKLIGIKIRDIEIRDIDELGSFLKSDSVDIGVICVPKKSAQKVSDELVNGGIRGIWNFAPIDLVVPEDVKVENVHLSESVSTLIYQLHQQR.

Positions 17 to 56 form a DNA-binding region, H-T-H motif; that stretch reads KYHRYLNELMKNDVDRISSKELGEKIGFTASQIRQDLNCF. Residue 91 to 96 participates in NAD(+) binding; the sequence is GAGNIG.

This sequence belongs to the transcriptional regulatory Rex family. In terms of assembly, homodimer.

The protein resides in the cytoplasm. Its function is as follows. Modulates transcription in response to changes in cellular NADH/NAD(+) redox state. The protein is Redox-sensing transcriptional repressor Rex of Clostridium botulinum (strain Alaska E43 / Type E3).